The sequence spans 676 residues: Ribonuclease R (676 aa).

One can recognise an RNB domain in the interval Arg207–Pro527. In terms of domain architecture, S1 motif spans Asn566–Ala651. A disordered region spans residues Asp656–Ser676. Positions Lys659 to Ser676 are enriched in basic residues.

Belongs to the RNR ribonuclease family. RNase R subfamily.

The protein localises to the cytoplasm. It carries out the reaction Exonucleolytic cleavage in the 3'- to 5'-direction to yield nucleoside 5'-phosphates.. Functionally, 3'-5' exoribonuclease that releases 5'-nucleoside monophosphates and is involved in maturation of structured RNAs. This chain is Ribonuclease R, found in Chlamydia pneumoniae (Chlamydophila pneumoniae).